Consider the following 125-residue polypeptide: Photosystem I reaction center subunit IV, chloroplastic (125 aa).

The transit peptide at 1 to 34 (MASIASSVAVRLGLTQVLPNKNFSSPRSTRLVVR) directs the protein to the chloroplast. The span at 42-57 (APAAASPEGEAPKAAA) shows a compositional bias: low complexity. The segment at 42–68 (APAAASPEGEAPKAAAKPPPIGPKRGS) is disordered.

The protein belongs to the PsaE family.

Its subcellular location is the plastid. It localises to the chloroplast thylakoid membrane. Functionally, stabilizes the interaction between PsaC and the PSI core, assists the docking of the ferredoxin to PSI and interacts with ferredoxin-NADP oxidoreductase. This chain is Photosystem I reaction center subunit IV, chloroplastic (PSAE-1), found in Spinacia oleracea (Spinach).